Reading from the N-terminus, the 208-residue chain is Ras-related protein Rab-6A (208 aa).

Position 2 is an N-acetylserine (Ser2). 10 residues coordinate GTP: Ser23, Val24, Gly25, Lys26, Thr27, Ser28, Asp39, Asn40, Tyr42, and Thr45. Position 27 (Thr27) interacts with Mg(2+). The Switch 1 signature appears at 32-50; the sequence is RFMYDSFDNTYQATIGIDF. Residues Thr45 and Asp68 each contribute to the Mg(2+) site. The Switch 2 signature appears at 69–88; the sequence is TAGQERFRSLIPSYIRDSTV. Residues Gly71, Asn126, Lys127, Asp129, Ser156, Ala157, and Lys158 each contribute to the GTP site. Position 184 is a phosphoserine (Ser184). Residues Cys206 and Cys208 are each lipidated (S-geranylgeranyl cysteine). Cys208 is modified (cysteine methyl ester).

It belongs to the small GTPase superfamily. Rab family. Interacts with BICDL1; leads to its accumulation in the pericentrosomal region. Interacts with SCYL1BP1. Interacts with VSP52. Interacts with RABGAP1. Interacts with GCC2 (via its GRIP domain). Interacts with RAB6IP1 (via its RUN 1 domain). Interacts with TMF1. Interacts with CIMAP3. Interacts (GTP-bound) with APBA1/MINT1 isoform 3, also called Mint1_826, but not with isoform 1. Interacts with RIC1; the interaction is direct with a preference for RAB6A-GDP. Interacts with RGP1; the interaction is direct with a preference for RAB6A-GDP. In terms of assembly, interacts (GTP-bound) with DYNLRB1; the interaction is direct. Interacts with BICD1. Interacts with BICD2; the interaction is direct. Interacts (GTP-bound) with VPS13B. As to quaternary structure, interacts with BICD1. Interacts (GDP-bound) with DYNLRB1; the interaction is direct. Interacts (GTP-bound) with VPS13B. Requires Mg(2+) as cofactor. Post-translationally, prenylated.

Its subcellular location is the golgi apparatus membrane. It is found in the cytoplasmic vesicle. The protein resides in the secretory vesicle. The protein localises to the acrosome membrane. The enzyme catalyses GTP + H2O = GDP + phosphate + H(+). Its activity is regulated as follows. Regulated by guanine nucleotide exchange factors (GEFs) which promote the exchange of bound GDP for free GTP. Regulated by GTPase activating proteins (GAPs) which increase the GTP hydrolysis activity. Inhibited by GDP dissociation inhibitors (GDIs). The small GTPases Rab are key regulators of intracellular membrane trafficking, from the formation of transport vesicles to their fusion with membranes. Rabs cycle between an inactive GDP-bound form and an active GTP-bound form that is able to recruit to membranes different sets of downstream effectors directly responsible for vesicle formation, movement, tethering and fusion. RAB6A acts as a regulator of COPI-independent retrograde transport from the Golgi apparatus towards the endoplasmic reticulum (ER). Has a low GTPase activity. Recruits VPS13B to the Golgi membrane. Plays a role in neuron projection development. This is Ras-related protein Rab-6A from Mus musculus (Mouse).